The sequence spans 525 residues: UPF0288 protein MA_3997 (525 aa).

It belongs to the UPF0288 family.

The sequence is that of UPF0288 protein MA_3997 from Methanosarcina acetivorans (strain ATCC 35395 / DSM 2834 / JCM 12185 / C2A).